The chain runs to 267 residues: Pyridoxine 5'-phosphate synthase (267 aa).

3-amino-2-oxopropyl phosphate is bound at residue N8. 10–11 (DH) contributes to the 1-deoxy-D-xylulose 5-phosphate binding site. R19 is a 3-amino-2-oxopropyl phosphate binding site. H44 acts as the Proton acceptor in catalysis. 1-deoxy-D-xylulose 5-phosphate-binding residues include R46 and H51. E71 serves as the catalytic Proton acceptor. Residue T101 coordinates 1-deoxy-D-xylulose 5-phosphate. Residue H219 is the Proton donor of the active site. 3-amino-2-oxopropyl phosphate-binding positions include G220 and 241–242 (GH).

It belongs to the PNP synthase family. As to quaternary structure, homooctamer; tetramer of dimers.

It localises to the cytoplasm. The enzyme catalyses 3-amino-2-oxopropyl phosphate + 1-deoxy-D-xylulose 5-phosphate = pyridoxine 5'-phosphate + phosphate + 2 H2O + H(+). It functions in the pathway cofactor biosynthesis; pyridoxine 5'-phosphate biosynthesis; pyridoxine 5'-phosphate from D-erythrose 4-phosphate: step 5/5. Functionally, catalyzes the complicated ring closure reaction between the two acyclic compounds 1-deoxy-D-xylulose-5-phosphate (DXP) and 3-amino-2-oxopropyl phosphate (1-amino-acetone-3-phosphate or AAP) to form pyridoxine 5'-phosphate (PNP) and inorganic phosphate. The chain is Pyridoxine 5'-phosphate synthase from Helicobacter hepaticus (strain ATCC 51449 / 3B1).